A 119-amino-acid polypeptide reads, in one-letter code: Large ribosomal subunit protein bL20 (119 aa).

The protein belongs to the bacterial ribosomal protein bL20 family.

Functionally, binds directly to 23S ribosomal RNA and is necessary for the in vitro assembly process of the 50S ribosomal subunit. It is not involved in the protein synthesizing functions of that subunit. This Legionella pneumophila (strain Paris) protein is Large ribosomal subunit protein bL20.